A 101-amino-acid polypeptide reads, in one-letter code: NAD(P)H-quinone oxidoreductase subunit 4L, chloroplastic (101 aa).

3 helical membrane passes run I2–I22, M32–F52, and I61–V81.

This sequence belongs to the complex I subunit 4L family. NDH is composed of at least 16 different subunits, 5 of which are encoded in the nucleus.

It is found in the plastid. The protein localises to the chloroplast thylakoid membrane. The enzyme catalyses a plastoquinone + NADH + (n+1) H(+)(in) = a plastoquinol + NAD(+) + n H(+)(out). The catalysed reaction is a plastoquinone + NADPH + (n+1) H(+)(in) = a plastoquinol + NADP(+) + n H(+)(out). NDH shuttles electrons from NAD(P)H:plastoquinone, via FMN and iron-sulfur (Fe-S) centers, to quinones in the photosynthetic chain and possibly in a chloroplast respiratory chain. The immediate electron acceptor for the enzyme in this species is believed to be plastoquinone. Couples the redox reaction to proton translocation, and thus conserves the redox energy in a proton gradient. This Lepidium virginicum (Virginia pepperweed) protein is NAD(P)H-quinone oxidoreductase subunit 4L, chloroplastic.